Reading from the N-terminus, the 236-residue chain is Mediator of RNA polymerase II transcription subunit 20 (236 aa).

The protein belongs to the Mediator complex subunit 20 family. Component of the Mediator complex.

Its subcellular location is the nucleus. Functionally, component of the Mediator complex, a coactivator involved in the regulated transcription of nearly all RNA polymerase II-dependent genes. Mediator functions as a bridge to convey information from gene-specific regulatory proteins to the basal RNA polymerase II transcription machinery. Mediator is recruited to promoters by direct interactions with regulatory proteins and serves as a scaffold for the assembly of a functional preinitiation complex with RNA polymerase II and the general transcription factors. This is Mediator of RNA polymerase II transcription subunit 20 (SRB2) from Debaryomyces hansenii (strain ATCC 36239 / CBS 767 / BCRC 21394 / JCM 1990 / NBRC 0083 / IGC 2968) (Yeast).